Here is a 93-residue protein sequence, read N- to C-terminus: MRFLLGLQYFASKKGVGSTKNGRDSESKRLGAKKSDGQFTNAGSIIYRQRGTKIHPGLNVGRGGDDTLFALISGIVKYEKFGKNRTRVSVIPN.

The propeptide occupies 1–10 (MRFLLGLQYF). The interval 14 to 36 (KGVGSTKNGRDSESKRLGAKKSD) is disordered. Over residues 21–36 (NGRDSESKRLGAKKSD) the composition is skewed to basic and acidic residues.

Belongs to the bacterial ribosomal protein bL27 family. Post-translationally, the N-terminus is cleaved by ribosomal processing cysteine protease Prp.

The polypeptide is Large ribosomal subunit protein bL27 (Mycoplasma capricolum subsp. capricolum (strain California kid / ATCC 27343 / NCTC 10154)).